Consider the following 394-residue polypeptide: Elongation factor Tu (394 aa).

The tr-type G domain maps to 10-204 (KPHVNIGTIG…AVDSYIPQPV (195 aa)). The interval 19–26 (GHVDHGKT) is G1. 19-26 (GHVDHGKT) provides a ligand contact to GTP. T26 serves as a coordination point for Mg(2+). The interval 60–64 (GITIS) is G2. Positions 81 to 84 (DCPG) are G3. GTP is bound by residues 81 to 85 (DCPGH) and 136 to 139 (NKID). The interval 136-139 (NKID) is G4. The segment at 174 to 176 (SAL) is G5.

This sequence belongs to the TRAFAC class translation factor GTPase superfamily. Classic translation factor GTPase family. EF-Tu/EF-1A subfamily. In terms of assembly, monomer.

It localises to the cytoplasm. It carries out the reaction GTP + H2O = GDP + phosphate + H(+). Its function is as follows. GTP hydrolase that promotes the GTP-dependent binding of aminoacyl-tRNA to the A-site of ribosomes during protein biosynthesis. The polypeptide is Elongation factor Tu (Rickettsia peacockii (strain Rustic)).